A 341-amino-acid chain; its full sequence is UDP-3-O-acylglucosamine N-acyltransferase (341 aa).

The active-site Proton acceptor is His255.

This sequence belongs to the transferase hexapeptide repeat family. LpxD subfamily. In terms of assembly, homotrimer.

It carries out the reaction a UDP-3-O-[(3R)-3-hydroxyacyl]-alpha-D-glucosamine + a (3R)-hydroxyacyl-[ACP] = a UDP-2-N,3-O-bis[(3R)-3-hydroxyacyl]-alpha-D-glucosamine + holo-[ACP] + H(+). It functions in the pathway bacterial outer membrane biogenesis; LPS lipid A biosynthesis. Functionally, catalyzes the N-acylation of UDP-3-O-acylglucosamine using 3-hydroxyacyl-ACP as the acyl donor. Is involved in the biosynthesis of lipid A, a phosphorylated glycolipid that anchors the lipopolysaccharide to the outer membrane of the cell. This chain is UDP-3-O-acylglucosamine N-acyltransferase, found in Granulibacter bethesdensis (strain ATCC BAA-1260 / CGDNIH1).